The chain runs to 132 residues: Large ribosomal subunit protein uL24 (132 aa).

This sequence belongs to the universal ribosomal protein uL24 family. As to quaternary structure, part of the 50S ribosomal subunit.

One of two assembly initiator proteins, it binds directly to the 5'-end of the 23S rRNA, where it nucleates assembly of the 50S subunit. Its function is as follows. One of the proteins that surrounds the polypeptide exit tunnel on the outside of the subunit. In Synechococcus sp. (strain JA-2-3B'a(2-13)) (Cyanobacteria bacterium Yellowstone B-Prime), this protein is Large ribosomal subunit protein uL24.